The following is a 557-amino-acid chain: Membrane protein insertase YidC (557 aa).

3 helical membrane-spanning segments follow: residues Trp-371–Ala-391, Leu-437–Leu-457, and Pro-515–Val-535.

Belongs to the OXA1/ALB3/YidC family. Type 1 subfamily. Interacts with the Sec translocase complex via SecD. Specifically interacts with transmembrane segments of nascent integral membrane proteins during membrane integration.

It localises to the cell inner membrane. In terms of biological role, required for the insertion and/or proper folding and/or complex formation of integral membrane proteins into the membrane. Involved in integration of membrane proteins that insert both dependently and independently of the Sec translocase complex, as well as at least some lipoproteins. Aids folding of multispanning membrane proteins. This is Membrane protein insertase YidC from Polynucleobacter necessarius subsp. necessarius (strain STIR1).